The following is a 558-amino-acid chain: Armadillo repeat-containing X-linked protein 5 (558 aa).

2 stretches are compositionally biased toward basic and acidic residues: residues 1–14 (MVDS…RGKA) and 139–156 (KSHD…REET). Disordered regions lie at residues 1 to 35 (MVDS…GKTQ) and 139 to 165 (KSHD…SSDE). The stretch at 300-339 (CKSRGFSLEPKEFDKLVALLKLTKDPFIHEIATMIMGISP) is one ARM 1 repeat. Residues 369–388 (HPGALSMVDDSSESSEEPKS) form a disordered region. 3 ARM repeats span residues 422-461 (IKFE…CLSK), 463-503 (HANT…NINF), and 520-558 (SELI…ILKL).

It belongs to the eutherian X-chromosome-specific Armcx family.

This Homo sapiens (Human) protein is Armadillo repeat-containing X-linked protein 5 (ARMCX5).